The following is a 1153-amino-acid chain: Protein unc-13 homolog 4B (1153 aa).

Residues 54–84 (VLKSSLAPLEENGSGGEEDSDESPDGTLQLS) form a disordered region. The C2 1 domain maps to 162–288 (ATHEEIYEAA…MKEIAVTASS (127 aa)). 5 residues coordinate Ca(2+): D195, D201, D252, F253, and D254. An MHD1 domain is found at 637 to 755 (FEVYLILKRY…RCCIFYAQQM (119 aa)). The region spanning 869 to 975 (SNSMDQLMMY…LETSDLIHQY (107 aa)) is the MHD2 domain. Residues 990-1114 (PYGQLTITAQ…EATPPGEQIM (125 aa)) enclose the C2 2 domain. Positions 1019, 1025, 1083, and 1085 each coordinate Ca(2+).

Belongs to the unc-13 family. In terms of assembly, interacts with Cam. The cofactor is Ca(2+).

It is found in the cytoplasm. Its subcellular location is the cytoskeleton. The protein localises to the cell projection. The protein resides in the filopodium. It localises to the late endosome. It is found in the lysosome. Functionally, essential for tracheal development in embryos. Functions with the GTPase Rab39 and downstream of dnd, to regulate lumen fusion between previously separate tracheal branches (anastomosis). Essential component of secretory lysosome-related organelles (SLs) that are present in the tracheal fusion tip cells (FCs). Mediates intracellular fusion of the extending tracheal stalk cell lumen in the FCs by recruiting the SNARE complex component Syx1A to the SLs, this may then enable the SLs to interact with complementary SNAREs (such as Syb) present in the apical membrane of the FC-FC interface and the membranes of the separate tracheal stalk cells. May also function in the maturation and exocytosis of the SLs. This is Protein unc-13 homolog 4B from Drosophila melanogaster (Fruit fly).